Reading from the N-terminus, the 331-residue chain is Phosphate acyltransferase (331 aa).

Belongs to the PlsX family. Homodimer. Probably interacts with PlsY.

It is found in the cytoplasm. It carries out the reaction a fatty acyl-[ACP] + phosphate = an acyl phosphate + holo-[ACP]. Its pathway is lipid metabolism; phospholipid metabolism. Functionally, catalyzes the reversible formation of acyl-phosphate (acyl-PO(4)) from acyl-[acyl-carrier-protein] (acyl-ACP). This enzyme utilizes acyl-ACP as fatty acyl donor, but not acyl-CoA. The chain is Phosphate acyltransferase from Chlorobaculum tepidum (strain ATCC 49652 / DSM 12025 / NBRC 103806 / TLS) (Chlorobium tepidum).